The chain runs to 442 residues: Cyclic 2,3-diphosphoglycerate synthetase (442 aa).

Belongs to the cyclic 2,3-diphosphoglycerate synthetase family.

It localises to the cytoplasm. It catalyses the reaction (2R)-2,3-bisphosphoglycerate + ATP + H(+) = cyclic (2R)-2,3-bisphosphoglycerate + ADP + phosphate. Its function is as follows. Catalyzes the formation of cyclic 2,3-diphosphoglycerate (cDPG) by formation of an intramolecular phosphoanhydride bond at the expense of ATP. The chain is Cyclic 2,3-diphosphoglycerate synthetase from Rubrobacter xylanophilus (strain DSM 9941 / JCM 11954 / NBRC 16129 / PRD-1).